The primary structure comprises 285 residues: Nucleotide-binding protein FMG_1084 (285 aa).

8–15 serves as a coordination point for ATP; it reads GMSGAGKS. Position 59–62 (59–62) interacts with GTP; it reads DIRG.

It belongs to the RapZ-like family.

Its function is as follows. Displays ATPase and GTPase activities. The sequence is that of Nucleotide-binding protein FMG_1084 from Finegoldia magna (strain ATCC 29328 / DSM 20472 / WAL 2508) (Peptostreptococcus magnus).